A 214-amino-acid chain; its full sequence is MVSLEARVREVKGKREARRLRRNGEVPAVVYGPATEPIPVKIKRSVLEKVFHTISEATPIQLIIKDDQGNTVSEKTVFLKMIQRDKVSETVVHLDFYEPTKGHRMRINVPLKVVGKPVGVEKGGFLEVFHEEIPVETDPDNVPQEIEVDVSSLDLGDVIYARDLKLPEGVKCLLGDEEVVVSVLVPKEVVIEETTEAEETAEPEVIRRKEEEEE.

The tract at residues 194 to 214 (TTEAEETAEPEVIRRKEEEEE) is disordered. Basic and acidic residues predominate over residues 204–214 (EVIRRKEEEEE).

Belongs to the bacterial ribosomal protein bL25 family. CTC subfamily. Part of the 50S ribosomal subunit; part of the 5S rRNA/L5/L18/L25 subcomplex. Contacts the 5S rRNA. Binds to the 5S rRNA independently of L5 and L18.

This is one of the proteins that binds to the 5S RNA in the ribosome where it forms part of the central protuberance. In Thermotoga petrophila (strain ATCC BAA-488 / DSM 13995 / JCM 10881 / RKU-1), this protein is Large ribosomal subunit protein bL25.